Here is a 547-residue protein sequence, read N- to C-terminus: Chaperonin GroEL (547 aa).

ATP contacts are provided by residues Thr-30–Pro-33, Lys-51, Asp-87–Thr-91, Gly-415, Asn-479–Ala-481, and Asp-495.

This sequence belongs to the chaperonin (HSP60) family. In terms of assembly, forms a cylinder of 14 subunits composed of two heptameric rings stacked back-to-back. Interacts with the co-chaperonin GroES.

It localises to the cytoplasm. The enzyme catalyses ATP + H2O + a folded polypeptide = ADP + phosphate + an unfolded polypeptide.. Together with its co-chaperonin GroES, plays an essential role in assisting protein folding. The GroEL-GroES system forms a nano-cage that allows encapsulation of the non-native substrate proteins and provides a physical environment optimized to promote and accelerate protein folding. This chain is Chaperonin GroEL, found in Polynucleobacter necessarius subsp. necessarius (strain STIR1).